We begin with the raw amino-acid sequence, 466 residues long: Glutamate--tRNA ligase (466 aa).

The short motif at 10-20 (PSPTGALHIGG) is the 'HIGH' region element. Positions 99, 101, 126, and 128 each coordinate Zn(2+). Residues 239-243 (KLSKR) carry the 'KMSKS' region motif. An ATP-binding site is contributed by Lys242.

It belongs to the class-I aminoacyl-tRNA synthetase family. Glutamate--tRNA ligase type 1 subfamily. As to quaternary structure, monomer. Requires Zn(2+) as cofactor.

The protein localises to the cytoplasm. The enzyme catalyses tRNA(Glu) + L-glutamate + ATP = L-glutamyl-tRNA(Glu) + AMP + diphosphate. Catalyzes the attachment of glutamate to tRNA(Glu) in a two-step reaction: glutamate is first activated by ATP to form Glu-AMP and then transferred to the acceptor end of tRNA(Glu). The chain is Glutamate--tRNA ligase from Pelagibacter ubique (strain HTCC1062).